The sequence spans 87 residues: Small ribosomal subunit protein bS20 (87 aa).

It belongs to the bacterial ribosomal protein bS20 family.

In terms of biological role, binds directly to 16S ribosomal RNA. In Finegoldia magna (strain ATCC 29328 / DSM 20472 / WAL 2508) (Peptostreptococcus magnus), this protein is Small ribosomal subunit protein bS20.